Reading from the N-terminus, the 453-residue chain is Putative F-box/FBD/LRR-repeat protein At1g66290 (453 aa).

The interval 1–28 is disordered; it reads MDEDGERRVRTKRSCSPESSDNGSGDEV. Polar residues predominate over residues 14–23; that stretch reads SCSPESSDNG. Residues 28–81 form the F-box domain; it reads VDWISDLPEALIVLVLLNLPTKDVIKTSVLSTKWRNIWRYVPRLDLDNRHFTEF. LRR repeat units lie at residues 155-179, 210-235, 246-269, 305-329, and 358-381; these read SLKLSEVTLTKPEFVSLPSLKVLVL, LDNVRVLRVISQSLLSFNYYGSSSKS, APKLEKLKLSHQLTASFIIENLSS, LSRVKTMTIAACTLEVIYDYSRCEP, and CSNLKSLVLESDYFPRKRTSIISE. In terms of domain architecture, FBD spans 373–423; sequence RKRTSIISEPRCLLSSLEYVKIEFALDKGKMELVRYLLENSPILKKLTLSL.

In Arabidopsis thaliana (Mouse-ear cress), this protein is Putative F-box/FBD/LRR-repeat protein At1g66290.